Consider the following 330-residue polypeptide: 2-phospho-L-lactate transferase (330 aa).

A 7,8-didemethyl-8-hydroxy-5-deazariboflavin-binding site is contributed by Asp-49.

This sequence belongs to the CofD family. As to quaternary structure, homodimer. It depends on Mg(2+) as a cofactor.

It catalyses the reaction (2S)-lactyl-2-diphospho-5'-guanosine + 7,8-didemethyl-8-hydroxy-5-deazariboflavin = oxidized coenzyme F420-0 + GMP + H(+). It functions in the pathway cofactor biosynthesis; coenzyme F420 biosynthesis. In terms of biological role, catalyzes the transfer of the 2-phospholactate moiety from (2S)-lactyl-2-diphospho-5'-guanosine to 7,8-didemethyl-8-hydroxy-5-deazariboflavin (FO) with the formation of oxidized coenzyme F420-0 and GMP. This Haloarcula marismortui (strain ATCC 43049 / DSM 3752 / JCM 8966 / VKM B-1809) (Halobacterium marismortui) protein is 2-phospho-L-lactate transferase.